A 115-amino-acid polypeptide reads, in one-letter code: Large ribosomal subunit protein bL19 (115 aa).

The protein belongs to the bacterial ribosomal protein bL19 family.

This protein is located at the 30S-50S ribosomal subunit interface and may play a role in the structure and function of the aminoacyl-tRNA binding site. The chain is Large ribosomal subunit protein bL19 from Streptococcus pyogenes serotype M1.